Consider the following 55-residue polypeptide: Large ribosomal subunit protein bL33 (55 aa).

The protein belongs to the bacterial ribosomal protein bL33 family.

This Pectobacterium carotovorum subsp. carotovorum (strain PC1) protein is Large ribosomal subunit protein bL33.